Reading from the N-terminus, the 182-residue chain is Pentatricopeptide repeat-containing protein At2g01360 (182 aa).

PPR repeat units follow at residues 30–64 (EKSAYLALAGNFLRSNELSKVIDVVKEMVKSQHSL), 65–95 (GVYHGAMLIHMLGFGRRPSLAAEALDLLPDD), and 98–132 (GLSAYTALMDVYISAGSPEKAMKILGEMREREIMP).

This sequence belongs to the PPR family. P subfamily.

The chain is Pentatricopeptide repeat-containing protein At2g01360 from Arabidopsis thaliana (Mouse-ear cress).